Consider the following 315-residue polypeptide: 7,8-didemethyl-8-hydroxy-5-deazariboflavin synthase (315 aa).

In terms of domain architecture, Radical SAM core spans 6-237 (ITYSPAFTLV…EDITIQIPAN (232 aa)). [4Fe-4S] cluster contacts are provided by Cys20, Cys24, and Cys27.

The protein belongs to the radical SAM superfamily. CofG family. In terms of assembly, consists of two subunits, CofG and CofH. [4Fe-4S] cluster is required as a cofactor.

The catalysed reaction is 5-amino-5-(4-hydroxybenzyl)-6-(D-ribitylimino)-5,6-dihydrouracil + S-adenosyl-L-methionine = 7,8-didemethyl-8-hydroxy-5-deazariboflavin + 5'-deoxyadenosine + L-methionine + NH4(+) + H(+). It functions in the pathway cofactor biosynthesis; coenzyme F0 biosynthesis. Catalyzes the radical-mediated synthesis of 7,8-didemethyl-8-hydroxy-5-deazariboflavin from 5-amino-5-(4-hydroxybenzyl)-6-(D-ribitylimino)-5,6-dihydrouracil. The sequence is that of 7,8-didemethyl-8-hydroxy-5-deazariboflavin synthase from Thermosynechococcus vestitus (strain NIES-2133 / IAM M-273 / BP-1).